A 485-amino-acid chain; its full sequence is NADH-quinone oxidoreductase subunit N (485 aa).

Helical transmembrane passes span Leu8–Ile28, Phe35–Val55, Phe75–Leu95, Phe105–Leu125, Ser127–Phe147, Tyr159–Ala179, Leu203–Phe223, Pro235–Met255, Ile271–Gln291, Leu297–Gln317, Val326–Leu346, Ala374–Gly394, Leu407–Leu426, and Ala449–Leu469.

This sequence belongs to the complex I subunit 2 family. NDH-1 is composed of 13 different subunits. Subunits NuoA, H, J, K, L, M, N constitute the membrane sector of the complex.

The protein localises to the cell inner membrane. The enzyme catalyses a quinone + NADH + 5 H(+)(in) = a quinol + NAD(+) + 4 H(+)(out). Functionally, NDH-1 shuttles electrons from NADH, via FMN and iron-sulfur (Fe-S) centers, to quinones in the respiratory chain. The immediate electron acceptor for the enzyme in this species is believed to be ubiquinone. Couples the redox reaction to proton translocation (for every two electrons transferred, four hydrogen ions are translocated across the cytoplasmic membrane), and thus conserves the redox energy in a proton gradient. In Pectobacterium atrosepticum (strain SCRI 1043 / ATCC BAA-672) (Erwinia carotovora subsp. atroseptica), this protein is NADH-quinone oxidoreductase subunit N.